Here is a 21-residue protein sequence, read N- to C-terminus: Major outer membrane protein (21 aa).

As to quaternary structure, disulfide bond interactions within and between MOMP molecules and other components form high molecular-weight oligomers.

The protein resides in the cell outer membrane. Structural rigidity of the outer membrane of elementary bodies and porin forming, permitting diffusion of solutes through the intracellular reticulate body membrane. This chain is Major outer membrane protein, found in Actinobacillus suis.